A 95-amino-acid chain; its full sequence is Blastocyst protein 4 (95 aa).

Positions 1–20 (MGAVFAIIGGFALDSPILRL) are cleaved as a signal peptide.

The chain is Blastocyst protein 4 from Oryctolagus cuniculus (Rabbit).